The chain runs to 68 residues: Large ribosomal subunit protein uL29 (68 aa).

It belongs to the universal ribosomal protein uL29 family.

This chain is Large ribosomal subunit protein uL29, found in Leuconostoc citreum (strain KM20).